A 625-amino-acid chain; its full sequence is Probable potassium transport system protein Kup (625 aa).

12 helical membrane passes run 13–33 (TALAALGVVFGDIGTSPLYAL), 53–73 (ILSIIFWCLMLIISIKYVAIV), 103–123 (IYMIAIGFIGASLFFGDGIIT), 141–161 (VFDPFIMPIAIAIIVTLFLVQ), 172–192 (FGPITLVWFLSLGILGIHSVI), 206–226 (AIQFIYHHPIMTFFVMGAVVL), 250–270 (WFFVVLPCLVLNYAGQGALLL), 282–302 (LLVPQWALYPMIIMATMATVI), 340–360 (IYVPFLNWLLLIAIIILILIF), 369–389 (AYGLAVTLTMLCDTILVAVFI), 400–420 (VLILIIPFFILESVLVGATSL), and 422–442 (ILSGGWVPLLIGAIAVTILMT).

Belongs to the HAK/KUP transporter (TC 2.A.72) family.

It is found in the cell inner membrane. The catalysed reaction is K(+)(in) + H(+)(in) = K(+)(out) + H(+)(out). Its function is as follows. Transport of potassium into the cell. Likely operates as a K(+):H(+) symporter. The polypeptide is Probable potassium transport system protein Kup (Acinetobacter baumannii (strain SDF)).